We begin with the raw amino-acid sequence, 392 residues long: Succinyl-diaminopimelate desuccinylase (392 aa).

Residue His77 coordinates Zn(2+). Asp79 is a catalytic residue. Asp110 provides a ligand contact to Zn(2+). The active-site Proton acceptor is Glu144. Zn(2+) is bound by residues Glu145, Glu173, and His359.

This sequence belongs to the peptidase M20A family. DapE subfamily. In terms of assembly, homodimer. The cofactor is Zn(2+). Co(2+) is required as a cofactor.

It carries out the reaction N-succinyl-(2S,6S)-2,6-diaminopimelate + H2O = (2S,6S)-2,6-diaminopimelate + succinate. It functions in the pathway amino-acid biosynthesis; L-lysine biosynthesis via DAP pathway; LL-2,6-diaminopimelate from (S)-tetrahydrodipicolinate (succinylase route): step 3/3. In terms of biological role, catalyzes the hydrolysis of N-succinyl-L,L-diaminopimelic acid (SDAP), forming succinate and LL-2,6-diaminopimelate (DAP), an intermediate involved in the bacterial biosynthesis of lysine and meso-diaminopimelic acid, an essential component of bacterial cell walls. The protein is Succinyl-diaminopimelate desuccinylase of Thiobacillus denitrificans (strain ATCC 25259 / T1).